The sequence spans 292 residues: MTFQELIFALENYWAKQGCVIQQPYDIEVGAGTFNPATFLRALGPEPWNVAYVEPSRRPTDGRYGENPNRLQHYYQYQVIMKPSPLNIQELYLDSLRSFGIDPLEHDIRFVEDDWESPTVGAWGLGWEVWLDGMEISQFTYFQQVGGIDVKPVCAELTYGIERIAMYIQGIDNVYDLQWNDSIKYGDVHHQGEVEFSTYNFEVADVDMLRKLFDMYEAEAIRTAEKDLVLPAYDYCLKCSHTFNLLNARGAISVAERTSYIGRVRNLARISAEGYIRQRERMGFPLLNRSED.

The protein belongs to the class-II aminoacyl-tRNA synthetase family. As to quaternary structure, tetramer of two alpha and two beta subunits.

It is found in the cytoplasm. The enzyme catalyses tRNA(Gly) + glycine + ATP = glycyl-tRNA(Gly) + AMP + diphosphate. The chain is Glycine--tRNA ligase alpha subunit from Syntrophus aciditrophicus (strain SB).